A 382-amino-acid polypeptide reads, in one-letter code: 2-heptyl-3-hydroxy-4(1H)-quinolone synthase (382 aa).

Belongs to the 3-hydroxybenzoate 6-hydroxylase family.

It carries out the reaction 2-heptyl-4(1H)-quinolone + NADH + O2 + H(+) = 2-heptyl-3-hydroxy-4(1H)-quinolone + NAD(+) + H2O. Involved in the terminal step of the biosynthesis of quinolone which in addition to serve as a potent signal for quorum sensing, chelates iron and promotes the formation of membrane vesicles (MVs). Catalyzes the hydroxylation of 2-heptyl-4-quinolone (C7-HHQ) to yield 2-heptyl-3-hydroxy-4-quinolone (PQS). The protein is 2-heptyl-3-hydroxy-4(1H)-quinolone synthase (pqsH) of Pseudomonas aeruginosa (strain ATCC 15692 / DSM 22644 / CIP 104116 / JCM 14847 / LMG 12228 / 1C / PRS 101 / PAO1).